Here is a 353-residue protein sequence, read N- to C-terminus: MKFALTGGGTGGHLSIAKALAIELEKQGIEAIYLGSTYGQDKEWFENSPLFSERYFFNTQGVVNKSFFKKIGSLFLQAKAAFKAKEILKKHQITHTISVGGFSAGPASFASLLNKIPLYIHEQNAIKGSLNRYLSPKAKAVFSSYAFKDKGNHVLTSYPVQNAFFDFARTRTEIKHILFLGGSQGAKAINEFALLNAPKLTKQGIKITHICGSDAHERMRFFYQELGLLDKVELFAFHNNITEVMHRADLCVSRAGASSVWELCANGLPTIFIPYPFASNNHQYYNVLEFEKENLCYVVPQNELLPKKLFEVIRKLNQKDDQGNKNLTTISNQLQQKIAKDGAKTIIETILSA.

UDP-N-acetyl-alpha-D-glucosamine is bound by residues 10–12 (TGG), Asn124, Ser183, and Gln283.

This sequence belongs to the glycosyltransferase 28 family. MurG subfamily.

The protein localises to the cell inner membrane. It carries out the reaction di-trans,octa-cis-undecaprenyl diphospho-N-acetyl-alpha-D-muramoyl-L-alanyl-D-glutamyl-meso-2,6-diaminopimeloyl-D-alanyl-D-alanine + UDP-N-acetyl-alpha-D-glucosamine = di-trans,octa-cis-undecaprenyl diphospho-[N-acetyl-alpha-D-glucosaminyl-(1-&gt;4)]-N-acetyl-alpha-D-muramoyl-L-alanyl-D-glutamyl-meso-2,6-diaminopimeloyl-D-alanyl-D-alanine + UDP + H(+). The protein operates within cell wall biogenesis; peptidoglycan biosynthesis. Cell wall formation. Catalyzes the transfer of a GlcNAc subunit on undecaprenyl-pyrophosphoryl-MurNAc-pentapeptide (lipid intermediate I) to form undecaprenyl-pyrophosphoryl-MurNAc-(pentapeptide)GlcNAc (lipid intermediate II). In Helicobacter pylori (strain Shi470), this protein is UDP-N-acetylglucosamine--N-acetylmuramyl-(pentapeptide) pyrophosphoryl-undecaprenol N-acetylglucosamine transferase.